A 458-amino-acid chain; its full sequence is Argininosuccinate lyase (458 aa).

Belongs to the lyase 1 family. Argininosuccinate lyase subfamily.

The protein resides in the cytoplasm. It catalyses the reaction 2-(N(omega)-L-arginino)succinate = fumarate + L-arginine. Its pathway is amino-acid biosynthesis; L-arginine biosynthesis; L-arginine from L-ornithine and carbamoyl phosphate: step 3/3. This Geobacter sulfurreducens (strain ATCC 51573 / DSM 12127 / PCA) protein is Argininosuccinate lyase.